Consider the following 141-residue polypeptide: Vasotocin-neurophysin VT (141 aa).

An intrachain disulfide couples C1 to C6. A Glycine amide modification is found at G9. Cystine bridges form between C22–C66, C25–C39, C33–C56, C40–C46, C73–C85, C79–C97, and C86–C91. A glycan (N-linked (GlcNAc...) asparagine) is linked at N117.

The protein belongs to the vasopressin/oxytocin family. Seven disulfide bonds are present in neurophysin.

Its subcellular location is the secreted. Vasotocin is an antidiuretic hormone. This is Vasotocin-neurophysin VT from Pelophylax lessonae (Pool frog).